The sequence spans 405 residues: MTVTPHLFIPGPTNIPDAVRMAMNIPMEDMRSPEFPKFTLPLFEDLKKAFKMKDGRVFIFPSSGTGAWESAVENTLATGDKVLMSRFGQFSLLWVDMCERLGLKVEVCDEEWGTGVPVEKYADILAKDKNHEIKAVFVTHNETATGVSSDVAGVRKALDAAKHPALLMVDGVSSVGSLDMRMGEWGVDCCVSGSQKGFMLPTGLGILAVSQKALDINKSKNGRMNRCFFSFEDMIKTNDQGFFPYTPATQLLRGLRTSLDLLFAEGLDNVFARHTRLASGVRAAVDAWGLKLCAKEPKWYSDTVSAILVPEGIDSNAITKTAYYRYNTSFGLGLNKVAGKVFRIGHLGMLDEVMIGGALFAAEMALKDNGVNLKLGSGTGAAAEYFSKNATKSATALTPKQAKAA.

An N6-(pyridoxal phosphate)lysine modification is found at lysine 196.

It belongs to the class-V pyridoxal-phosphate-dependent aminotransferase family. Requires pyridoxal 5'-phosphate as cofactor.

The catalysed reaction is glyoxylate + L-serine = 3-hydroxypyruvate + glycine. It participates in one-carbon metabolism; formaldehyde assimilation via serine pathway. This chain is Serine--glyoxylate aminotransferase (sgaA), found in Hyphomicrobium methylovorum.